A 308-amino-acid polypeptide reads, in one-letter code: Ectoine dioxygenase (308 aa).

Glutamine 131 serves as a coordination point for L-ectoine. 2-oxoglutarate is bound at residue lysine 137. Residues histidine 148, aspartate 150, and histidine 249 each contribute to the Fe cation site.

The protein belongs to the PhyH family. EctD subfamily. Homodimer. It depends on Fe(2+) as a cofactor.

It catalyses the reaction L-ectoine + 2-oxoglutarate + O2 = 5-hydroxyectoine + succinate + CO2. In terms of biological role, involved in the biosynthesis of 5-hydroxyectoine, called compatible solute, which helps organisms to survive extreme osmotic stress by acting as a highly soluble organic osmolyte. Catalyzes the 2-oxoglutarate-dependent selective hydroxylation of L-ectoine to yield (4S,5S)-5-hydroxyectoine. This Bordetella parapertussis (strain 12822 / ATCC BAA-587 / NCTC 13253) protein is Ectoine dioxygenase.